Consider the following 372-residue polypeptide: Citrate synthase 2 (372 aa).

The active site involves H257. S284 is modified (phosphoserine). Residue D308 is part of the active site.

This sequence belongs to the citrate synthase family. As to quaternary structure, homodimer.

The enzyme catalyses oxaloacetate + acetyl-CoA + H2O = citrate + CoA + H(+). Its pathway is carbohydrate metabolism; tricarboxylic acid cycle; isocitrate from oxaloacetate: step 1/2. Might regulate the synthesis and function of enzymes involved in later enzymatic steps of Krebs cycle. Loss in activity results in sporulation defect. The polypeptide is Citrate synthase 2 (citZ) (Bacillus subtilis (strain 168)).